Consider the following 87-residue polypeptide: MVKNSVISVISQEEKRGSVEFQVFNFTNKIRRLTSHLELHKKDYLSQRGLKKILGKRQRLLAYLSKKNRVRYKELINQLDIRETKTR.

It belongs to the universal ribosomal protein uS15 family. In terms of assembly, part of the 30S ribosomal subunit.

The protein resides in the plastid. It localises to the chloroplast. This Nicotiana tabacum (Common tobacco) protein is Small ribosomal subunit protein uS15c (rps15).